We begin with the raw amino-acid sequence, 495 residues long: UDP-glycosyltransferase 73C5 (495 aa).

Residues 146 to 162 form a helical membrane-spanning segment; that stretch reads ILFHGMGCFCLLCMHVL. Residues Ser296, 356 to 358, 373 to 381, and 395 to 398 each bind UDP-alpha-D-glucose; these read SPQ, HCGWNSTLE, and FADQ. The segment at 446 to 477 is disordered; the sequence is MGESDDAKERRRRAKELGDSAHKAVEEGGSSH. A compositionally biased stretch (basic and acidic residues) spans 450–471; that stretch reads DDAKERRRRAKELGDSAHKAVE.

It belongs to the UDP-glycosyltransferase family. In terms of tissue distribution, elongating hypocotyls and root-specific. Expressed in the vascular system, in meristematic tissues of the root tip, and in the vasculature of the hypocotyl right after germination. In late stage of flower development, expressed in petals, and in abscission zones.

The protein resides in the membrane. In terms of biological role, specifically catalyzes 23-O-glucosylation of brassinosteroids, resulting probably in their inactivation. Also, involved in the O-glucosylation of trans-zeatin and dihydrozeatin. Active in vitro on cis-zeatin, dihydrozeatin-9-N-Glc, and olomoucine. Also involved in the detoxification of the Fusarium mycotoxin deoxynivalenol by the transfer of glucose from UDP-glucose to the hydroxyl group at C-3. Possesses low quercetin 7-O-glucosyltransferase and 4'-O-glucosyltransferase activities in vitro. This is UDP-glycosyltransferase 73C5 (UGT73C5) from Arabidopsis thaliana (Mouse-ear cress).